Consider the following 82-residue polypeptide: U6 snRNA-associated Sm-like protein LSm6 (82 aa).

The Sm domain maps to 13 to 82 (DPSGFLSEII…GNNVMYISAD (70 aa)).

It belongs to the snRNP Sm proteins family. SmF/LSm6 subfamily. Component of the heptameric LSM1-LSM7 complex, which consists of snr-1/lsm1, snr-2/lsm2, snr-3/lsm3, snr-4/lsm4, snr-5/lsm5, snr-6/lsm6 and snr-7/lsm7. Component of the heptameric LSM2-LSM8 complex, which consists of snr-2/lsm2, snr-3/lsm3, snr-4/lsm4, snr-5/lsm5, snr-6/lsm6, snr-7/lsm7 and snr-8/lsm8. The LSm subunits form a seven-membered ring structure with a doughnut shape.

It localises to the cytoplasm. Its subcellular location is the nucleus. Functionally, component of LSm protein complexes, which are involved in RNA processing and may function in a chaperone-like manner, facilitating the efficient association of RNA processing factors with their substrates. Component of the cytoplasmic LSM1-LSM7 complex, which is thought to be involved in mRNA degradation by activating the decapping step in the 5'-to-3' mRNA decay pathway. Component of the nuclear LSM2-LSM8 complex, which is involved in splicing of nuclear mRNAs. LSM2-LSM8 associates with multiple snRNP complexes containing the U6 snRNA (U4/U6 di-snRNP, spliceosomal U4/U6.U5 tri-snRNP, and free U6 snRNP). It binds directly to the 3'-terminal U-tract of U6 snRNA and plays a role in the biogenesis and stability of the U6 snRNP and U4/U6 snRNP complexes. LSM2-LSM8 probably also is involved degradation of nuclear pre-mRNA by targeting them for decapping, and in processing of pre-tRNAs, pre-rRNAs and U3 snoRNA. This Neurospora crassa (strain ATCC 24698 / 74-OR23-1A / CBS 708.71 / DSM 1257 / FGSC 987) protein is U6 snRNA-associated Sm-like protein LSm6 (snr-6).